The primary structure comprises 411 residues: Arginine deiminase (411 aa).

Catalysis depends on Cys-401, which acts as the Amidino-cysteine intermediate.

It belongs to the arginine deiminase family. Post-translationally, glycosylated.

The protein localises to the cytoplasm. It carries out the reaction L-arginine + H2O = L-citrulline + NH4(+). It functions in the pathway amino-acid degradation; L-arginine degradation via ADI pathway; carbamoyl phosphate from L-arginine: step 1/2. The sequence is that of Arginine deiminase from Streptococcus pyogenes serotype M3 (strain ATCC BAA-595 / MGAS315).